The chain runs to 252 residues: 3-deoxy-manno-octulosonate cytidylyltransferase (252 aa).

This sequence belongs to the KdsB family.

It is found in the cytoplasm. The catalysed reaction is 3-deoxy-alpha-D-manno-oct-2-ulosonate + CTP = CMP-3-deoxy-beta-D-manno-octulosonate + diphosphate. It participates in nucleotide-sugar biosynthesis; CMP-3-deoxy-D-manno-octulosonate biosynthesis; CMP-3-deoxy-D-manno-octulosonate from 3-deoxy-D-manno-octulosonate and CTP: step 1/1. The protein operates within bacterial outer membrane biogenesis; lipopolysaccharide biosynthesis. In terms of biological role, activates KDO (a required 8-carbon sugar) for incorporation into bacterial lipopolysaccharide in Gram-negative bacteria. In Xylella fastidiosa (strain Temecula1 / ATCC 700964), this protein is 3-deoxy-manno-octulosonate cytidylyltransferase.